The primary structure comprises 190 residues: Orotate phosphoribosyltransferase (190 aa).

5-phospho-alpha-D-ribose 1-diphosphate is bound by residues arginine 101, lysine 102, lysine 105, histidine 107, and 128 to 136; that span reads EDVVTTGGS. Orotate is bound by residues threonine 132 and arginine 160.

The protein belongs to the purine/pyrimidine phosphoribosyltransferase family. PyrE subfamily. As to quaternary structure, homodimer. It depends on Mg(2+) as a cofactor.

The catalysed reaction is orotidine 5'-phosphate + diphosphate = orotate + 5-phospho-alpha-D-ribose 1-diphosphate. The protein operates within pyrimidine metabolism; UMP biosynthesis via de novo pathway; UMP from orotate: step 1/2. Its function is as follows. Catalyzes the transfer of a ribosyl phosphate group from 5-phosphoribose 1-diphosphate to orotate, leading to the formation of orotidine monophosphate (OMP). This is Orotate phosphoribosyltransferase from Synechococcus sp. (strain CC9605).